We begin with the raw amino-acid sequence, 288 residues long: MITLAVKVGMIQLCGCSGCHISLLDLHDKLLEVLPNLEIVYAPIIADPKEIPEGIDVFLVEGGIRNEHDEHLIHEIREKSKIVIAWGTCAAYGGIPGLGNLYKKEELLNYVYSTDSTENKGEIPSEEIPPLEEYVKPIKDFIKVDYTIPGCPPTPKMIADAIIALLNGEEPKLPTKIVCDECPRKKENVFPETFKRTHEGRPDPERCLFEQGYTCLGFATRAGCGAKCPSAGVPCRGCFGKTDKSLDLGANAANVLANAGEAALEIPDKVALLNRFTLPDALINRKAK.

Belongs to the [NiFe]/[NiFeSe] hydrogenase small subunit family. As to quaternary structure, the F420-non-reducing hydrogenase vhu is composed of four subunits; VhuA, VhuD, VhuG and VhuU.

The chain is F420-non-reducing hydrogenase vhu subunit G (vhuG) from Methanocaldococcus jannaschii (strain ATCC 43067 / DSM 2661 / JAL-1 / JCM 10045 / NBRC 100440) (Methanococcus jannaschii).